We begin with the raw amino-acid sequence, 361 residues long: Peptide chain release factor 1 (361 aa).

Gln-237 is subject to N5-methylglutamine. Residues Asp-285–Arg-296 are compositionally biased toward basic and acidic residues. Residues Asp-285 to Arg-305 are disordered.

It belongs to the prokaryotic/mitochondrial release factor family. In terms of processing, methylated by PrmC. Methylation increases the termination efficiency of RF1.

It localises to the cytoplasm. Peptide chain release factor 1 directs the termination of translation in response to the peptide chain termination codons UAG and UAA. In Shewanella halifaxensis (strain HAW-EB4), this protein is Peptide chain release factor 1.